The primary structure comprises 165 residues: PARP-type zinc finger-containing protein C13F5.07c (165 aa).

The PARP-type; degenerate zinc-finger motif lies at tyrosine 8–histidine 100. Positions histidine 100–glutamate 114 are enriched in basic and acidic residues. Residues histidine 100–aspartate 165 are disordered. The segment covering asparagine 117 to proline 128 has biased composition (polar residues). The segment covering valine 131–threonine 141 has biased composition (basic residues). Residues serine 149–aspartate 165 are compositionally biased toward acidic residues.

Its subcellular location is the cytoplasm. The protein resides in the nucleus. The polypeptide is PARP-type zinc finger-containing protein C13F5.07c (Schizosaccharomyces pombe (strain 972 / ATCC 24843) (Fission yeast)).